The sequence spans 264 residues: tRNA (guanine-N(1)-)-methyltransferase (264 aa).

Residues Gly125 and Leu145–Leu150 each bind S-adenosyl-L-methionine.

It belongs to the RNA methyltransferase TrmD family. In terms of assembly, homodimer.

The protein localises to the cytoplasm. It catalyses the reaction guanosine(37) in tRNA + S-adenosyl-L-methionine = N(1)-methylguanosine(37) in tRNA + S-adenosyl-L-homocysteine + H(+). Specifically methylates guanosine-37 in various tRNAs. This chain is tRNA (guanine-N(1)-)-methyltransferase, found in Burkholderia multivorans (strain ATCC 17616 / 249).